A 119-amino-acid polypeptide reads, in one-letter code: Putative F-box protein At2g39415 (119 aa).

The F-box domain occupies 37–92; the sequence is IDSISSLPDVILQQILSSLPTNLAIRTSVLSTRWRHVWSDTPYIYFDGPGTLYRGL.

The sequence is that of Putative F-box protein At2g39415 from Arabidopsis thaliana (Mouse-ear cress).